Reading from the N-terminus, the 67-residue chain is Large ribosomal subunit protein uL30 (67 aa).

The protein belongs to the universal ribosomal protein uL30 family. As to quaternary structure, part of the 50S ribosomal subunit.

The protein is Large ribosomal subunit protein uL30 of Sorangium cellulosum (strain So ce56) (Polyangium cellulosum (strain So ce56)).